Consider the following 787-residue polypeptide: Protein FAM149A (787 aa).

Disordered stretches follow at residues 22 to 105 (SPAV…SSGA), 144 to 175 (GSNSVTASSPRNPRQLRAPGEREPSVWMAPGP), 189 to 226 (EEWTSDSDSQDDPEGRGLSEGLRKQSSEKSKDPLPTNF), 238 to 284 (ASES…SWRD), 432 to 455 (DGDEHLGQSPALRGRKRHRHGLPP), 573 to 602 (LQQRPTYSADRTQNDQDDKLPGGGVGASSR), and 665 to 697 (AVQTSRSRLPPIGSETGEPNTAASGSRPVSYRG). Positions 37-46 (SVDSGASTSL) are enriched in polar residues. Low complexity-rich tracts occupy residues 51–65 (TLTLLPSLPPDTAAS) and 96–105 (SGSLPSSSGA). Positions 144–155 (GSNSVTASSPRN) are enriched in polar residues. Residues 189-200 (EEWTSDSDSQDD) show a composition bias toward acidic residues. A compositionally biased stretch (basic and acidic residues) spans 201-220 (PEGRGLSEGLRKQSSEKSKD). Low complexity predominate over residues 239-250 (SESPSSFSSSGS). Residues 251–261 (RTPTEAHNSWP) are compositionally biased toward polar residues. Positions 262-274 (GSSTQSSTTGLST) are enriched in low complexity.

Belongs to the FAM149 family.

The chain is Protein FAM149A (Fam149a) from Mus musculus (Mouse).